A 206-amino-acid chain; its full sequence is Protein SYM1 (206 aa).

3 consecutive transmembrane segments (helical) span residues 16–36, 103–123, and 155–175; these read PLIT…YLAQ, LVFA…VLEF, and LFNF…IFSI.

This sequence belongs to the peroxisomal membrane protein PXMP2/4 family.

Its subcellular location is the mitochondrion inner membrane. Functionally, may be involved in cellular response to stress. Required to maintain mitochondrial DNA (mtDNA) integrity and stability. The sequence is that of Protein SYM1 (SYM1) from Debaryomyces hansenii (strain ATCC 36239 / CBS 767 / BCRC 21394 / JCM 1990 / NBRC 0083 / IGC 2968) (Yeast).